The following is a 65-amino-acid chain: Large ribosomal subunit protein bL35 (65 aa).

The protein belongs to the bacterial ribosomal protein bL35 family.

The chain is Large ribosomal subunit protein bL35 from Methylobacillus flagellatus (strain ATCC 51484 / DSM 6875 / VKM B-1610 / KT).